Reading from the N-terminus, the 78-residue chain is Beta-defensin 29 (78 aa).

Positions 1 to 23 (MPVTKPYFVTVAVLLILVDKTTG) are cleaved as a signal peptide. Cystine bridges form between C40/C67, C47/C61, and C51/C68.

The protein belongs to the beta-defensin family.

Its subcellular location is the secreted. Functionally, has antibacterial activity. In Rattus norvegicus (Rat), this protein is Beta-defensin 29 (Defb29).